The following is a 63-amino-acid chain: Beta-insect depressant toxin Im-3 (63 aa).

One can recognise an LCN-type CS-alpha/beta domain in the interval 1 to 63; sequence KEGYGVGKDG…KVWESSTNTC (63 aa). 4 disulfide bridges follow: C11-C63, C15-C37, C22-C44, and C26-C46.

It belongs to the long (4 C-C) scorpion toxin superfamily. Sodium channel inhibitor family. Beta subfamily. As to expression, expressed by the venom gland.

The protein resides in the secreted. Its function is as follows. Beta toxins bind voltage-independently at site-4 of sodium channels (Nav) and shift the voltage of activation toward more negative potentials thereby affecting sodium channel activation and promoting spontaneous and repetitive firing. Induces paralysis in cricket A.domestica but does not induce death. The protein is Beta-insect depressant toxin Im-3 of Isometrus maculatus (Lesser brown scorpion).